We begin with the raw amino-acid sequence, 879 residues long: Leucine--tRNA ligase (879 aa).

The 'HIGH' region motif lies at 43-53 (PYPSGRIHMGH). Positions 636 to 640 (KMSKS) match the 'KMSKS' region motif. ATP is bound at residue Lys-639.

The protein belongs to the class-I aminoacyl-tRNA synthetase family.

Its subcellular location is the cytoplasm. It catalyses the reaction tRNA(Leu) + L-leucine + ATP = L-leucyl-tRNA(Leu) + AMP + diphosphate. The protein is Leucine--tRNA ligase of Afipia carboxidovorans (strain ATCC 49405 / DSM 1227 / KCTC 32145 / OM5) (Oligotropha carboxidovorans).